Consider the following 213-residue polypeptide: Thiopurine S-methyltransferase (213 aa).

Trp-10, Met-45, Glu-66, and Arg-120 together coordinate S-adenosyl-L-methionine.

It belongs to the class I-like SAM-binding methyltransferase superfamily. TPMT family.

It localises to the cytoplasm. It carries out the reaction S-adenosyl-L-methionine + a thiopurine = S-adenosyl-L-homocysteine + a thiopurine S-methylether.. The protein is Thiopurine S-methyltransferase of Photobacterium profundum (strain SS9).